A 150-amino-acid polypeptide reads, in one-letter code: 2-aminobenzenesulfonate 2,3-dioxygenase subunit beta (150 aa).

This sequence belongs to the bacterial ring-hydroxylating dioxygenase beta subunit family. In terms of assembly, heterotetramer with a alpha2beta2 structure.

The catalysed reaction is 2-aminobenzenesulfonate + NADH + O2 + 2 H(+) = 2,3-dihydroxybenzenesulfonate + NH4(+) + NAD(+). Its activity is regulated as follows. Inhibited by o-phenanthroline. Functionally, beta subunit of the oxygenase component of the 2-aminobenzenesulfonate 2,3-dioxygenase system (deaminating) (ABSDOS). Can use 2-aminobenzenesulfonate (ABS), benzenesulfonate (BS), 4-toluenesulfonate (TS), 2-nitrobenzenesulfonate, 3- and 4-aminobenzenesulfonates, 4-chloro- and 4-hydroxybenzenesulfonates and pyridine-3-sulfonate as substrates. No desulfonation of ABS to aminocatechol or aminophenol detected. This is 2-aminobenzenesulfonate 2,3-dioxygenase subunit beta from Alcaligenes sp.